Reading from the N-terminus, the 532-residue chain is Protein DETOXIFICATION 51 (532 aa).

The next 12 membrane-spanning stretches (helical) occupy residues 65 to 85 (FPIA…MFFL), 98 to 118 (LAIA…ALGM), 142 to 162 (VVFL…VGKI), 176 to 196 (AQTY…LHPI), 208 to 228 (PVTL…LFLV), 238 to 258 (VAVA…CYVW), 290 to 310 (VSVC…GLLV), 316 to 336 (VAAM…PSSL), 358 to 378 (LTAT…AAFA), 395 to 415 (ILQL…GNCP), 439 to 459 (AFYL…GIGF), and 461 to 481 (GLWV…MYVV).

Belongs to the multi antimicrobial extrusion (MATE) (TC 2.A.66.1) family. As to expression, expressed in the meristematic regions. Mainly detected in tissues where cells were actively dividing, such as leaf primordia and young leaves, the junction between lateral root and the primary root, root cap, hydathodes, the junction between secondary inflorescence and the main inflorescence, young stamen and young siliques. Highly expressed at the junction between the hypocotyl and the root, and at the marginal areas of cotyledons and true leaves, coinciding with the locations of the hydathode. Also highly expressed at the basal regions of the newly emerged lateral roots. In the floral organs, mostly expressed at the style of the pistil.

It localises to the endosome membrane. The protein resides in the late endosome membrane. Functionally, functions as a multidrug and toxin extrusion transporter that negatively regulates plant disease resistance. Plays an important role in maintaining normal plant architecture, possibly by regulating local auxin biosynthesis. May act as a negative regulator of hypocotyl cell elongation in the light. This is Protein DETOXIFICATION 51 from Arabidopsis thaliana (Mouse-ear cress).